The following is a 993-amino-acid chain: UPF0182 protein MAP_3291c (993 aa).

The next 7 membrane-spanning stretches (helical) occupy residues 18–38, 63–83, 113–133, 175–195, 210–230, 254–274, and 287–307; these read ILIL…RLID, FVVF…GLAV, LVSV…AQSY, FVAV…FGGI, IQLV…YWLD, AVLP…AAVF, and IGLV…PLIV. The segment at 903–941 is disordered; sequence NIQPTEGGAPAASPPANAPAPAVTPGSAPPVAAPPVPDG. A compositionally biased stretch (pro residues) spans 929–939; it reads SAPPVAAPPVP.

The protein belongs to the UPF0182 family.

The protein localises to the cell membrane. This Mycolicibacterium paratuberculosis (strain ATCC BAA-968 / K-10) (Mycobacterium paratuberculosis) protein is UPF0182 protein MAP_3291c.